The chain runs to 186 residues: UPF0301 protein LHK_02881 (186 aa).

The protein belongs to the UPF0301 (AlgH) family.

The protein is UPF0301 protein LHK_02881 of Laribacter hongkongensis (strain HLHK9).